The following is an 803-amino-acid chain: Homeobox protein Wariai (803 aa).

Over residues 23-41 (SDYDSYEQQYNNPTGSKQY) the composition is skewed to polar residues. Residues 23–144 (SDYDSYEQQY…PTPYSSNSFS (122 aa)) form a disordered region. Residues 42–124 (NNNNNNNTNT…NNNNNNNNNN (83 aa)) show a composition bias toward low complexity. Residues 125–138 (QHLSQSQQLSPTPY) are compositionally biased toward polar residues. The segment at residues 162–221 (SKKKRKRTSPDQLKLLEKIFMAHQHPNLNLRSQLAVELHMTARSVQIWFQNRRAKARNME) is a DNA-binding region (homeobox). The segment at 288–330 (INGNMGGGGGGGGGSHNHHHHNHNHNHHNHNHNHNHNQPLSNG) is disordered. Residues 291–302 (NMGGGGGGGGGS) show a composition bias toward gly residues. Basic residues predominate over residues 303–322 (HNHHHHNHNHNHHNHNHNHN). 9 ANK repeats span residues 374–403 (KGLS…NPNI), 407–436 (QGNT…DPNL), 440–469 (EGVS…EVSV), 474–503 (NGET…KASV), 507–536 (NNRT…DMNA), 540–569 (DGHT…DPNI), 573–602 (EGYT…KLNI), 606–636 (NGQN…EIAA), and 642–671 (QGYT…SKKI). Positions 695–760 (KSSNNNNSNS…PPGNKFEEDD (66 aa)) are disordered. Positions 696-746 (SSNNNNSNSNINNINNINNINNINSQPNTNSDNNNNNNNNNFNENYSNGNN) are enriched in low complexity.

It localises to the nucleus. Functionally, putative transcription factor, that seems to be involved in anterior-posterior patterning of the slug, probably by controlling the proportions of prestalk and prespore cells. In Dictyostelium discoideum (Social amoeba), this protein is Homeobox protein Wariai (warA).